The primary structure comprises 426 residues: Mitochondrial distribution and morphology protein 12 (426 aa).

The 426-residue stretch at 1 to 426 (MSIEVDWKTA…VFPSFWTFLI (426 aa)) folds into the SMP-LTD domain. Disordered stretches follow at residues 88–147 (AHGN…GTPG), 185–264 (WTDH…FRFP), and 346–370 (ADDQETRDKDDHPRSGLDPTTSPKR). The segment covering 96-109 (THSELNEPPYRDEV) has biased composition (basic and acidic residues). Low complexity predominate over residues 216–236 (SSNPTSRPSTSSTLPSHPSGS). Composition is skewed to basic and acidic residues over residues 244–264 (SHPEEEHLDDPAEPDHPFRFP) and 349–360 (QETRDKDDHPRS).

This sequence belongs to the MDM12 family. Component of the ER-mitochondria encounter structure (ERMES) or MDM complex, composed of mmm1, mdm10, mdm12 and mdm34. A mmm1 homodimer associates with one molecule of mdm12 on each side in a pairwise head-to-tail manner, and the SMP-LTD domains of mmm1 and mdm12 generate a continuous hydrophobic tunnel for phospholipid trafficking.

It is found in the mitochondrion outer membrane. The protein localises to the endoplasmic reticulum membrane. Component of the ERMES/MDM complex, which serves as a molecular tether to connect the endoplasmic reticulum (ER) and mitochondria. Components of this complex are involved in the control of mitochondrial shape and protein biogenesis, and function in nonvesicular lipid trafficking between the ER and mitochondria. Mdm12 is required for the interaction of the ER-resident membrane protein mmm1 and the outer mitochondrial membrane-resident beta-barrel protein mdm10. The mdm12-mmm1 subcomplex functions in the major beta-barrel assembly pathway that is responsible for biogenesis of all mitochondrial outer membrane beta-barrel proteins, and acts in a late step after the SAM complex. The mdm10-mdm12-mmm1 subcomplex further acts in the TOM40-specific pathway after the action of the mdm12-mmm1 complex. Essential for establishing and maintaining the structure of mitochondria and maintenance of mtDNA nucleoids. This chain is Mitochondrial distribution and morphology protein 12, found in Aspergillus terreus (strain NIH 2624 / FGSC A1156).